A 343-amino-acid chain; its full sequence is Heat-inducible transcription repressor HrcA (343 aa).

It belongs to the HrcA family.

In terms of biological role, negative regulator of class I heat shock genes (grpE-dnaK-dnaJ and groELS operons). Prevents heat-shock induction of these operons. This is Heat-inducible transcription repressor HrcA from Mycolicibacterium gilvum (strain PYR-GCK) (Mycobacterium gilvum (strain PYR-GCK)).